The sequence spans 146 residues: MEGQQKFNQLLNEINVYKQQGDLIQQQIELVRASIAEVDALTNTLDDLEGKDSVEAFVPVGAGSFIKGELKNTDEVIVSIGSGIAVKKDVDGARETIARQKKDLEDSLDKMLANMQQVSDIIGSLSAQAEQLAAVAQGNMSATGLN.

This sequence belongs to the prefoldin alpha subunit family. As to quaternary structure, heterohexamer of two alpha and four beta subunits.

It is found in the cytoplasm. Its function is as follows. Molecular chaperone capable of stabilizing a range of proteins. Seems to fulfill an ATP-independent, HSP70-like function in archaeal de novo protein folding. This chain is Prefoldin subunit alpha, found in Methanobrevibacter smithii (strain ATCC 35061 / DSM 861 / OCM 144 / PS).